Consider the following 319-residue polypeptide: MTNSSTFCPVYRDLEPFTYFFYLVFLIGIIGSCFATWAFIQKTTNHRCVSIYLINLLTADFLLTLALPVKIIVDLGVAPWKLRIFHCQVTACLIYINMYLSIIFLAFVSIDRCLQLIHSCKIYRIQEPGFAKMISAVVWLMVLLIMVPNMVIPIKDIKEKSNVGCMEFKKEFGRNWHLLTNFICVAIFLNFSVIILISNFLAIRQLYRNRDNTNYPSVKSALLHILLVTASYIICFVPYHAVRIPYTLSQTEVISDCSTRIALFKAKEATLLLAVSNLCFDPILYYHLSKAFRLKVTETFASPKKSKPLEERLRSENDV.

Residues 1 to 21 (MTNSSTFCPVYRDLEPFTYFF) are Extracellular-facing. N3 carries N-linked (GlcNAc...) asparagine glycosylation. The helical transmembrane segment at 22-42 (YLVFLIGIIGSCFATWAFIQK) threads the bilayer. Residues 43 to 48 (TTNHRC) lie on the Cytoplasmic side of the membrane. A helical transmembrane segment spans residues 49-69 (VSIYLINLLTADFLLTLALPV). Over 70–89 (KIIVDLGVAPWKLRIFHCQV) the chain is Extracellular. A helical membrane pass occupies residues 90-110 (TACLIYINMYLSIIFLAFVSI). Residues 111–132 (DRCLQLIHSCKIYRIQEPGFAK) are Cytoplasmic-facing. A helical membrane pass occupies residues 133–153 (MISAVVWLMVLLIMVPNMVIP). At 154–181 (IKDIKEKSNVGCMEFKKEFGRNWHLLTN) the chain is on the extracellular side. Residues 182 to 202 (FICVAIFLNFSVIILISNFLA) form a helical membrane-spanning segment. Topologically, residues 203–224 (IRQLYRNRDNTNYPSVKSALLH) are cytoplasmic. A helical transmembrane segment spans residues 225 to 245 (ILLVTASYIICFVPYHAVRIP). Topologically, residues 246-268 (YTLSQTEVISDCSTRIALFKAKE) are extracellular. A helical membrane pass occupies residues 269–289 (ATLLLAVSNLCFDPILYYHLS). The Cytoplasmic portion of the chain corresponds to 290 to 319 (KAFRLKVTETFASPKKSKPLEERLRSENDV).

This sequence belongs to the G-protein coupled receptor 1 family. As to expression, highly expressed in hypothalamus, including the arcuate nucleus, paraventricular nucleus and dorsomedial hypothalamus. Expressed in periaqueductal gray (at protein level), found primarily in GABAergic neurons and to a lesser extent in glutamatergic neurons. Expressed in T cells and natural killer cells.

It localises to the cell membrane. Functionally, G-protein coupled receptor for Big LEN, a 16-amino acid neuropeptide produced from the precursor protein, proSAAS (encoded by PCSK1N). Acts through a G(i)-alpha-mediated pathway in response to Big LEN. Big LEN-GPR171 system plays an important role in regulating feeding and metabolism. Also plays a role in modulating fear and anxiety-like behaviors in the basolateral amygdala. Big LEN-GPR171 modulates the mu-type opioid receptor signaling and antinociception. Acts as a negative regulator T cell function. The polypeptide is G-protein coupled receptor 171 (Gpr171) (Mus musculus (Mouse)).